Consider the following 364-residue polypeptide: UDP-N-acetylglucosamine--N-acetylmuramyl-(pentapeptide) pyrophosphoryl-undecaprenol N-acetylglucosamine transferase (364 aa).

UDP-N-acetyl-alpha-D-glucosamine is bound by residues T10–G12, N128, R170, S199, I250, and Q295.

It belongs to the glycosyltransferase 28 family. MurG subfamily.

It localises to the cell inner membrane. The catalysed reaction is di-trans,octa-cis-undecaprenyl diphospho-N-acetyl-alpha-D-muramoyl-L-alanyl-D-glutamyl-meso-2,6-diaminopimeloyl-D-alanyl-D-alanine + UDP-N-acetyl-alpha-D-glucosamine = di-trans,octa-cis-undecaprenyl diphospho-[N-acetyl-alpha-D-glucosaminyl-(1-&gt;4)]-N-acetyl-alpha-D-muramoyl-L-alanyl-D-glutamyl-meso-2,6-diaminopimeloyl-D-alanyl-D-alanine + UDP + H(+). The protein operates within cell wall biogenesis; peptidoglycan biosynthesis. Its function is as follows. Cell wall formation. Catalyzes the transfer of a GlcNAc subunit on undecaprenyl-pyrophosphoryl-MurNAc-pentapeptide (lipid intermediate I) to form undecaprenyl-pyrophosphoryl-MurNAc-(pentapeptide)GlcNAc (lipid intermediate II). This chain is UDP-N-acetylglucosamine--N-acetylmuramyl-(pentapeptide) pyrophosphoryl-undecaprenol N-acetylglucosamine transferase, found in Chlorobaculum parvum (strain DSM 263 / NCIMB 8327) (Chlorobium vibrioforme subsp. thiosulfatophilum).